The sequence spans 369 residues: Capsid protein (369 aa).

It localises to the host nucleus. It is found in the virion. Its function is as follows. Self-assembles to form the virion icosahedral capsid. This chain is Capsid protein, found in Avon-Heathcote Estuary associated kieseladnavirus (AHEaBV).